The sequence spans 483 residues: Probable cytosol aminopeptidase (483 aa).

Residues K252 and D257 each contribute to the Mn(2+) site. K264 is a catalytic residue. Mn(2+)-binding residues include D275, D334, and E336. R338 is a catalytic residue.

Belongs to the peptidase M17 family. Mn(2+) serves as cofactor.

It is found in the cytoplasm. The enzyme catalyses Release of an N-terminal amino acid, Xaa-|-Yaa-, in which Xaa is preferably Leu, but may be other amino acids including Pro although not Arg or Lys, and Yaa may be Pro. Amino acid amides and methyl esters are also readily hydrolyzed, but rates on arylamides are exceedingly low.. It carries out the reaction Release of an N-terminal amino acid, preferentially leucine, but not glutamic or aspartic acids.. In terms of biological role, presumably involved in the processing and regular turnover of intracellular proteins. Catalyzes the removal of unsubstituted N-terminal amino acids from various peptides. The polypeptide is Probable cytosol aminopeptidase (Legionella pneumophila (strain Corby)).